The chain runs to 463 residues: ATP synthase subunit beta (463 aa).

ATP is bound at residue 152-159 (GGAGVGKT).

Belongs to the ATPase alpha/beta chains family. F-type ATPases have 2 components, CF(1) - the catalytic core - and CF(0) - the membrane proton channel. CF(1) has five subunits: alpha(3), beta(3), gamma(1), delta(1), epsilon(1). CF(0) has three main subunits: a(1), b(2) and c(9-12). The alpha and beta chains form an alternating ring which encloses part of the gamma chain. CF(1) is attached to CF(0) by a central stalk formed by the gamma and epsilon chains, while a peripheral stalk is formed by the delta and b chains.

It is found in the cell membrane. The catalysed reaction is ATP + H2O + 4 H(+)(in) = ADP + phosphate + 5 H(+)(out). Its function is as follows. Produces ATP from ADP in the presence of a proton gradient across the membrane. The catalytic sites are hosted primarily by the beta subunits. This is ATP synthase subunit beta from Clostridium botulinum (strain Eklund 17B / Type B).